The sequence spans 555 residues: Bicyclo-germacrene synthase (555 aa).

Mg(2+)-binding residues include aspartate 311 and glutamate 315. The short motif at 311–315 (DDTYE) is the DDXXD motif element. Homodimerization regions lie at residues 316–322 (YATLDEL) and 392–429 (EAKW…VGVG). Residues aspartate 459 and glutamate 467 each contribute to the Mg(2+) site.

This sequence belongs to the terpene synthase family. As to quaternary structure, homodimer. Requires Mn(2+) as cofactor. The cofactor is Mg(2+). Expressed in peltate glandular trichomes. Present at low levels in flowers, leaves and stems.

It catalyses the reaction (2E,6E)-farnesyl diphosphate = bicyclogermacrene + diphosphate. The catalysed reaction is (2E)-geranyl diphosphate = terpinolene + diphosphate. It carries out the reaction (2E)-geranyl diphosphate = (4R)-limonene + diphosphate. The enzyme catalyses (2E)-geranyl diphosphate + H2O = (2E)-geraniol + diphosphate. It catalyses the reaction (2E,6E)-farnesyl diphosphate = allo-aromadendrene + diphosphate. Its pathway is secondary metabolite biosynthesis; terpenoid biosynthesis. Involved in the biosynthesis of phenolic sesquiterpenes natural products. Sesquiterpene synthase converting (2E,6E)-farnesyl diphosphate (FPP) to alloaromadendrene and bicyclo-germacrene. The product formation is dependent on the metal ions present and in presence of manganese, bicyclo-germacrene is greatly favored while both alloaromadendrene and bicyclo-germacrene are produced in equivalent amounts in the presence of magnesium. Can also convert geranyl diphosphate (GPP) to terpinolene, limonene and geraniol, and this conversion is not affected by the presence of magnesium or manganese. The polypeptide is Bicyclo-germacrene synthase (TPS4) (Origanum vulgare (Wild marjoram)).